A 100-amino-acid chain; its full sequence is Putative pterin-4-alpha-carbinolamine dehydratase (100 aa).

It belongs to the pterin-4-alpha-carbinolamine dehydratase family.

The catalysed reaction is (4aS,6R)-4a-hydroxy-L-erythro-5,6,7,8-tetrahydrobiopterin = (6R)-L-erythro-6,7-dihydrobiopterin + H2O. This chain is Putative pterin-4-alpha-carbinolamine dehydratase, found in Bradyrhizobium diazoefficiens (strain JCM 10833 / BCRC 13528 / IAM 13628 / NBRC 14792 / USDA 110).